The chain runs to 350 residues: Chorismate synthase (350 aa).

2 residues coordinate NADP(+): R39 and R45. Residues 119–121 (RSS), 213–214 (QA), G258, 273–277 (KPIPT), and R299 contribute to the FMN site.

This sequence belongs to the chorismate synthase family. In terms of assembly, homotetramer. It depends on FMNH2 as a cofactor.

It carries out the reaction 5-O-(1-carboxyvinyl)-3-phosphoshikimate = chorismate + phosphate. Its pathway is metabolic intermediate biosynthesis; chorismate biosynthesis; chorismate from D-erythrose 4-phosphate and phosphoenolpyruvate: step 7/7. In terms of biological role, catalyzes the anti-1,4-elimination of the C-3 phosphate and the C-6 proR hydrogen from 5-enolpyruvylshikimate-3-phosphate (EPSP) to yield chorismate, which is the branch point compound that serves as the starting substrate for the three terminal pathways of aromatic amino acid biosynthesis. This reaction introduces a second double bond into the aromatic ring system. The sequence is that of Chorismate synthase from Thermoanaerobacter pseudethanolicus (strain ATCC 33223 / 39E) (Clostridium thermohydrosulfuricum).